Here is a 293-residue protein sequence, read N- to C-terminus: ATP synthase gamma chain (293 aa).

Belongs to the ATPase gamma chain family. F-type ATPases have 2 components, CF(1) - the catalytic core - and CF(0) - the membrane proton channel. CF(1) has five subunits: alpha(3), beta(3), gamma(1), delta(1), epsilon(1). CF(0) has three main subunits: a, b and c.

Its subcellular location is the cell inner membrane. Produces ATP from ADP in the presence of a proton gradient across the membrane. The gamma chain is believed to be important in regulating ATPase activity and the flow of protons through the CF(0) complex. This is ATP synthase gamma chain from Psychrobacter sp. (strain PRwf-1).